Reading from the N-terminus, the 180-residue chain is UPF0227 protein Spro_1925 (180 aa).

It belongs to the UPF0227 family.

The chain is UPF0227 protein Spro_1925 from Serratia proteamaculans (strain 568).